Here is a 177-residue protein sequence, read N- to C-terminus: Phosphatidylglycerol/phosphatidylinositol transfer protein (177 aa).

The first 17 residues, 1–17 (MRLSAAVIALLSTSAAA), serve as a signal peptide directing secretion. The propeptide occupies 18 to 30 (FSVYRENSVSAND).

It belongs to the NPC2 family. In terms of assembly, monomer.

Functionally, catalyzes the intermembrane transfer of phosphatidylglycerol and phosphatidylinositol. The polypeptide is Phosphatidylglycerol/phosphatidylinositol transfer protein (npc-2) (Neurospora crassa (strain ATCC 24698 / 74-OR23-1A / CBS 708.71 / DSM 1257 / FGSC 987)).